The primary structure comprises 384 residues: Gibberellin 3-beta-dioxygenase 1 (384 aa).

One can recognise a Fe2OG dioxygenase domain in the interval 225–327 (TLTSTIHLNM…RISMPYFLGP (103 aa)). Fe cation is bound by residues His250, Asp252, and His308. 2-oxoglutarate-binding residues include Arg318 and Ser320.

It belongs to the iron/ascorbate-dependent oxidoreductase family. L-ascorbate is required as a cofactor. Fe(2+) serves as cofactor. Expressed in unopened flowers.

It catalyses the reaction gibberellin A20 + 2-oxoglutarate + O2 = gibberellin A1 + succinate + CO2. Its pathway is plant hormone biosynthesis; gibberellin biosynthesis. Its function is as follows. Catalyzes the 3-beta-hydroxylation of the inactive gibberellin precursors, leading to the formation of bioactive gibberellins. In vitro, converts the precursors GA20, GA5, GA44 and GA9 to the corresponding 3-beta-hydroxylated bioactive products GA1, GA3, GA38 and GA4, respectively. Involved in the production of bioactive GA for vegetative growth and development. May possess 2,3-desaturase activity, catalyzing the conversion of GA9 to 2,3-dehydro-GA9, and GA20 to GA5 (2,3-dehydro GA20). May possess 2-beta-hydroxylase activity, catalyzing the conversion of GA1 and GA4 to the corresponding 2-beta-hydroxylated products GA8 and GA34, respectively. In Oryza sativa subsp. japonica (Rice), this protein is Gibberellin 3-beta-dioxygenase 1.